The following is an 89-amino-acid chain: HssA/B-like protein 21 (89 aa).

This sequence belongs to the hssA/B family.

The polypeptide is HssA/B-like protein 21 (hssl21) (Dictyostelium discoideum (Social amoeba)).